A 312-amino-acid chain; its full sequence is MPIKIPAHLPAYDILTREGVMVMSEDQAARQDIRPLRIGLLNLMPKKIQTETQFARLIGATPLQIELSLIRMTEHQTKTTASEHMEEFYRPFQEVRDEKFDGLIITGAPIEHLEFSDVTYWDELGEVFAWTQSNVHSTFGVCWGGMAMINHFHGIRKHMLDHKAFGCFRHRNLDPASPYLRGFSDDFVIPVSRWTEVKQAEVDAVPELVTLLGSDEVGPCLISDPGHRALYIFNHFEYDSDTLKQEYDRDVEGGTAINVPINYYPDDDPSRKPLNRWRSHAHLLYGNWISEIYETTPYDMARIGLESTDLRG.

Residue cysteine 142 is the Acyl-thioester intermediate of the active site. Residues lysine 163 and serine 192 each coordinate substrate. Catalysis depends on histidine 235, which acts as the Proton acceptor. The active site involves glutamate 237. Substrate is bound at residue arginine 249.

It belongs to the MetA family.

It is found in the cytoplasm. The enzyme catalyses L-homoserine + acetyl-CoA = O-acetyl-L-homoserine + CoA. It participates in amino-acid biosynthesis; L-methionine biosynthesis via de novo pathway; O-acetyl-L-homoserine from L-homoserine: step 1/1. Functionally, transfers an acetyl group from acetyl-CoA to L-homoserine, forming acetyl-L-homoserine. The chain is Homoserine O-acetyltransferase from Ruegeria pomeroyi (strain ATCC 700808 / DSM 15171 / DSS-3) (Silicibacter pomeroyi).